The primary structure comprises 466 residues: Alpha-1A adrenergic receptor (466 aa).

Topologically, residues 1 to 27 are extracellular; sequence MVLLSENASEGSNCTHPPAQVNISKAI. N-linked (GlcNAc...) asparagine glycans are attached at residues asparagine 7, asparagine 13, and asparagine 22. Residues 28 to 51 form a helical membrane-spanning segment; it reads LLGVILGGLIIFGVLGNILVILSV. Over 52-64 the chain is Cytoplasmic; that stretch reads ACHRHLHSVTHYY. A helical membrane pass occupies residues 65–88; it reads IVNLAVADLLLTSTVLPFSAIFEI. The Extracellular portion of the chain corresponds to 89-99; it reads LGYWAFGRVFC. A disulfide bond links cysteine 99 and cysteine 176. A helical transmembrane segment spans residues 100–122; the sequence is NIWAAVDVLCCTASIMGLCIISI. Residues 123–143 lie on the Cytoplasmic side of the membrane; the sequence is DRYIGVSYPLRYPTIVTQRRG. Residues 144 to 167 form a helical membrane-spanning segment; that stretch reads VRALLCVWALSLVISIGPLFGWRQ. Topologically, residues 168–181 are extracellular; it reads QAPEDETICQINEE. Residues 182-205 traverse the membrane as a helical segment; that stretch reads PGYVLFSALGSFYVPLTIILVMYC. At 206–273 the chain is on the cytoplasmic side; that stretch reads RVYVVAKRES…FSREKKAAKT (68 aa). Position 215 is a phosphoserine; by PKA (serine 215). A helical membrane pass occupies residues 274–297; that stretch reads LGIVVGCFVLCWLPFFLVMPIGSF. Over 298–305 the chain is Extracellular; it reads FPNFKPPE. A helical membrane pass occupies residues 306–329; it reads TVFKIVFWLGYLNSCINPIIYPCS. Residues 330–466 lie on the Cytoplasmic side of the membrane; the sequence is SQEFKKAFQN…ISLGENGEEV (137 aa). Residues 334–349 carry the Nuclear localization signal motif; that stretch reads KKAFQNVLRIQCLRRR. Cysteine 345 carries the S-palmitoyl cysteine lipid modification.

This sequence belongs to the G-protein coupled receptor 1 family. Adrenergic receptor subfamily. ADRA1A sub-subfamily. As to quaternary structure, homo- and heterooligomer. Heterooligomerizes with ADRA1B homooligomers in cardiac myocytes. Interacts with CAVIN4.

Its subcellular location is the nucleus membrane. The protein resides in the cell membrane. It is found in the cytoplasm. The protein localises to the membrane. It localises to the caveola. Functionally, this alpha-adrenergic receptor mediates its action by association with G proteins that activate a phosphatidylinositol-calcium second messenger system. Its effect is mediated by G(q) and G(11) proteins. Nuclear ADRA1A-ADRA1B heterooligomers regulate phenylephrine (PE)-stimulated ERK signaling in cardiac myocytes. In Mus musculus (Mouse), this protein is Alpha-1A adrenergic receptor (Adra1a).